Reading from the N-terminus, the 213-residue chain is Imidazole glycerol phosphate synthase subunit HisH (213 aa).

Residues 4–213 (SIAIVDYGMG…LYRNFVHWNP (210 aa)) form the Glutamine amidotransferase type-1 domain. Cys83 functions as the Nucleophile in the catalytic mechanism. Residues His193 and Glu195 contribute to the active site.

Heterodimer of HisH and HisF.

Its subcellular location is the cytoplasm. It catalyses the reaction 5-[(5-phospho-1-deoxy-D-ribulos-1-ylimino)methylamino]-1-(5-phospho-beta-D-ribosyl)imidazole-4-carboxamide + L-glutamine = D-erythro-1-(imidazol-4-yl)glycerol 3-phosphate + 5-amino-1-(5-phospho-beta-D-ribosyl)imidazole-4-carboxamide + L-glutamate + H(+). The enzyme catalyses L-glutamine + H2O = L-glutamate + NH4(+). The protein operates within amino-acid biosynthesis; L-histidine biosynthesis; L-histidine from 5-phospho-alpha-D-ribose 1-diphosphate: step 5/9. IGPS catalyzes the conversion of PRFAR and glutamine to IGP, AICAR and glutamate. The HisH subunit catalyzes the hydrolysis of glutamine to glutamate and ammonia as part of the synthesis of IGP and AICAR. The resulting ammonia molecule is channeled to the active site of HisF. In Burkholderia pseudomallei (strain K96243), this protein is Imidazole glycerol phosphate synthase subunit HisH.